The primary structure comprises 485 residues: Protein nucleotidyltransferase YdiU (485 aa).

ATP is bound by residues Gly-90, Gly-92, Arg-93, Lys-113, Asp-125, Gly-126, Arg-176, and Arg-183. Asp-252 (proton acceptor) is an active-site residue. Mg(2+) is bound by residues Asn-253 and Asp-262. Asp-262 contacts ATP.

The protein belongs to the SELO family. It depends on Mg(2+) as a cofactor. Mn(2+) serves as cofactor.

It catalyses the reaction L-seryl-[protein] + ATP = 3-O-(5'-adenylyl)-L-seryl-[protein] + diphosphate. It carries out the reaction L-threonyl-[protein] + ATP = 3-O-(5'-adenylyl)-L-threonyl-[protein] + diphosphate. The catalysed reaction is L-tyrosyl-[protein] + ATP = O-(5'-adenylyl)-L-tyrosyl-[protein] + diphosphate. The enzyme catalyses L-histidyl-[protein] + UTP = N(tele)-(5'-uridylyl)-L-histidyl-[protein] + diphosphate. It catalyses the reaction L-seryl-[protein] + UTP = O-(5'-uridylyl)-L-seryl-[protein] + diphosphate. It carries out the reaction L-tyrosyl-[protein] + UTP = O-(5'-uridylyl)-L-tyrosyl-[protein] + diphosphate. Nucleotidyltransferase involved in the post-translational modification of proteins. It can catalyze the addition of adenosine monophosphate (AMP) or uridine monophosphate (UMP) to a protein, resulting in modifications known as AMPylation and UMPylation. In Aliivibrio fischeri (strain ATCC 700601 / ES114) (Vibrio fischeri), this protein is Protein nucleotidyltransferase YdiU.